The sequence spans 258 residues: Imidazole glycerol phosphate synthase subunit HisF (258 aa).

Active-site residues include aspartate 11 and aspartate 130.

Belongs to the HisA/HisF family. Heterodimer of HisH and HisF.

The protein resides in the cytoplasm. It carries out the reaction 5-[(5-phospho-1-deoxy-D-ribulos-1-ylimino)methylamino]-1-(5-phospho-beta-D-ribosyl)imidazole-4-carboxamide + L-glutamine = D-erythro-1-(imidazol-4-yl)glycerol 3-phosphate + 5-amino-1-(5-phospho-beta-D-ribosyl)imidazole-4-carboxamide + L-glutamate + H(+). The protein operates within amino-acid biosynthesis; L-histidine biosynthesis; L-histidine from 5-phospho-alpha-D-ribose 1-diphosphate: step 5/9. IGPS catalyzes the conversion of PRFAR and glutamine to IGP, AICAR and glutamate. The HisF subunit catalyzes the cyclization activity that produces IGP and AICAR from PRFAR using the ammonia provided by the HisH subunit. This chain is Imidazole glycerol phosphate synthase subunit HisF, found in Xanthobacter autotrophicus (strain ATCC BAA-1158 / Py2).